Here is a 313-residue protein sequence, read N- to C-terminus: Porphobilinogen deaminase (313 aa).

An S-(dipyrrolylmethanemethyl)cysteine modification is found at Cys242.

This sequence belongs to the HMBS family. As to quaternary structure, monomer. It depends on dipyrromethane as a cofactor.

It catalyses the reaction 4 porphobilinogen + H2O = hydroxymethylbilane + 4 NH4(+). Its pathway is porphyrin-containing compound metabolism; protoporphyrin-IX biosynthesis; coproporphyrinogen-III from 5-aminolevulinate: step 2/4. Functionally, tetrapolymerization of the monopyrrole PBG into the hydroxymethylbilane pre-uroporphyrinogen in several discrete steps. This chain is Porphobilinogen deaminase, found in Yersinia enterocolitica serotype O:8 / biotype 1B (strain NCTC 13174 / 8081).